Consider the following 326-residue polypeptide: Heat-inducible transcription repressor HrcA (326 aa).

The protein belongs to the HrcA family.

Its function is as follows. Negative regulator of class I heat shock genes (grpE-dnaK-dnaJ and groELS operons). Prevents heat-shock induction of these operons. The protein is Heat-inducible transcription repressor HrcA of Staphylococcus saprophyticus subsp. saprophyticus (strain ATCC 15305 / DSM 20229 / NCIMB 8711 / NCTC 7292 / S-41).